The primary structure comprises 3097 residues: Neural-cadherin (3097 aa).

The first 36 residues, 1-36 (MAARRCLNQLRQRYITNRFNICTCAIFLISLPFILA), serve as a signal peptide directing secretion. N-linked (GlcNAc...) asparagine glycosylation is found at Asn-97 and Asn-150. The Cadherin 1 domain occupies 181 to 305 (VRENQPAGTR…LDENDNRPIF (125 aa)). Asn-325 and Asn-426 each carry an N-linked (GlcNAc...) asparagine glycan. 15 Cadherin domains span residues 430 to 543 (HREK…PPYF), 554 to 651 (VQLN…APQF), 660 to 756 (IPEN…APKF), 766 to 858 (VDED…EPKF), 867 to 968 (VDEN…KPVF), 978 to 1078 (VEEG…PPLF), 1087 to 1183 (VKQD…PPVW), 1193 to 1299 (VKEN…IPLF), 1307 to 1414 (VLEG…PPYF), 1423 to 1514 (VDEN…PPVF), 1523 to 1630 (ITEE…APIF), 1639 to 1742 (VTEN…PPQF), 1749 to 1861 (TEVD…KPHF), 1870 to 1966 (VFED…APKF), and 1974 to 2085 (LPEH…QPGS). Asn-930 is a glycosylation site (N-linked (GlcNAc...) asparagine). Asn-1266 is a glycosylation site (N-linked (GlcNAc...) asparagine). 11 disulfide bridges follow: Cys-2346–Cys-2357, Cys-2351–Cys-2366, Cys-2368–Cys-2377, Cys-2559–Cys-2585, Cys-2592–Cys-2607, Cys-2601–Cys-2616, Cys-2618–Cys-2627, Cys-2787–Cys-2822, Cys-2869–Cys-2880, Cys-2874–Cys-2891, and Cys-2893–Cys-2902. One can recognise an EGF-like 1 domain in the interval 2346 to 2377 (CRTTPCHNGGRCVDTRFGPHCSCPVGYTGPRC). The Laminin G-like 1 domain occupies 2379 to 2585 (QTTRSFRGNG…GLSRNSVAGC (207 aa)). One can recognise an EGF-like 2 domain in the interval 2592-2627 (CAQTETTARCWEHGNCVGSLSEARCHCRPGWTGPAC). Positions 2631–2822 (TIPTTFKAQS…TMARNLEKGC (192 aa)) constitute a Laminin G-like 2 domain. Positions 2869–2902 (CLDMPCMNGATCINLEPRLRYRCICPDGFWGENC) constitute an EGF-like 3 domain. Residues 2917-2937 (ALAAILVCLLIILILVLVFVV) form a helical membrane-spanning segment. Over 2938-3097 (YNRRREAHIK…PNPHNTELEL (160 aa)) the chain is Cytoplasmic.

In terms of tissue distribution, in the embryo, the protein first appears in the mesoderm at stage 9 and is present in the myoblasts and muscle fibers by stage 12 and stage 14, respectively. At stage 12 the protein is also located in the axons of the entire CNS, but not in the glial cells. In third instar larvae protein is expressed in the CNS neuropile, photoreceptor axons and precursors of adult muscles.

It is found in the cell membrane. In terms of biological role, cadherins are calcium-dependent cell adhesion proteins. They preferentially interact with themselves in a homophilic manner in connecting cells; cadherins may thus contribute to the sorting of heterogeneous cell types. May associate with arm neural isoform and participate in the transmission of developmental information. This chain is Neural-cadherin (CadN), found in Drosophila melanogaster (Fruit fly).